Consider the following 366-residue polypeptide: MTPEHLPTEQYEAQLAEKVARLQSMMAPFSGLVPEVFRSPVSHYRMRAEFRLWHDGDDLYHIMFDQQTKSRIRVDTFPAASQLINTLMKAMIAGVRDNHALRHKLFQIDYLTTLSNQAVVSLLYHKKLDEEWREAATALRDALRAQGLNVHLIGRATKTKIELDQDYIDERLPVAGKEMIYRQVENSFTQPNAAMNIQMLEWALEVTKDSKGDLLELYCGNGNFSLALARNFDRVLATEIAKPSVAAAQYNIAANHIDNVQIIRMAAEEFTQAMNGVREFNRLQGIDLKRYQCETIFVDPPRSGLDSETEKMVQAYPRILYISCNPETLCKNLETLSQTHTVSRLALFDQFPYTHHMECGVLLTAR.

S-adenosyl-L-methionine is bound by residues Gln190, Tyr218, Asn223, Glu239, and Asp299. Cys324 functions as the Nucleophile in the catalytic mechanism. Glu358 functions as the Proton acceptor in the catalytic mechanism.

Belongs to the class I-like SAM-binding methyltransferase superfamily. RNA M5U methyltransferase family. TrmA subfamily.

It catalyses the reaction uridine(54) in tRNA + S-adenosyl-L-methionine = 5-methyluridine(54) in tRNA + S-adenosyl-L-homocysteine + H(+). The enzyme catalyses uridine(341) in tmRNA + S-adenosyl-L-methionine = 5-methyluridine(341) in tmRNA + S-adenosyl-L-homocysteine + H(+). Its function is as follows. Dual-specificity methyltransferase that catalyzes the formation of 5-methyluridine at position 54 (m5U54) in all tRNAs, and that of position 341 (m5U341) in tmRNA (transfer-mRNA). This Salmonella agona (strain SL483) protein is tRNA/tmRNA (uracil-C(5))-methyltransferase.